We begin with the raw amino-acid sequence, 430 residues long: Enolase (430 aa).

Glutamine 164 provides a ligand contact to (2R)-2-phosphoglycerate. Residue glutamate 208 is the Proton donor of the active site. Positions 245, 288, and 315 each coordinate Mg(2+). Positions 340, 369, 370, and 391 each coordinate (2R)-2-phosphoglycerate. The active-site Proton acceptor is lysine 340.

It belongs to the enolase family. Mg(2+) is required as a cofactor.

Its subcellular location is the cytoplasm. It localises to the secreted. It is found in the cell surface. The catalysed reaction is (2R)-2-phosphoglycerate = phosphoenolpyruvate + H2O. It participates in carbohydrate degradation; glycolysis; pyruvate from D-glyceraldehyde 3-phosphate: step 4/5. Functionally, catalyzes the reversible conversion of 2-phosphoglycerate (2-PG) into phosphoenolpyruvate (PEP). It is essential for the degradation of carbohydrates via glycolysis. In Thermococcus onnurineus (strain NA1), this protein is Enolase.